A 442-amino-acid polypeptide reads, in one-letter code: Ribosome biogenesis protein NOP53 (442 aa).

Residues 242 to 264 (KPSSNTNLKKIEDKTPRQAQKSV) form a disordered region.

It belongs to the NOP53 family.

It is found in the nucleus. Its subcellular location is the nucleolus. The protein localises to the nucleoplasm. In terms of biological role, may play a role in ribosome biogenesis. The chain is Ribosome biogenesis protein NOP53 from Arabidopsis thaliana (Mouse-ear cress).